The following is a 782-amino-acid chain: DNA repair and recombination protein RAD54-like (782 aa).

Residues 1–20 (MRRSLAPSQRGGQRLSSRND) are compositionally biased toward polar residues. Positions 1–28 (MRRSLAPSQRGGQRLSSRNDFTPPLLKK) are disordered. Residues 2–9 (RRSLAPSQ) are required for chromatin remodeling, strand pairing activities and coupling of ATPase activity. Thr22 carries the phosphothreonine modification. The 176-residue stretch at 168–343 (EGKRGNFNGC…FSLVNFVNPE (176 aa)) folds into the Helicase ATP-binding domain. 181 to 188 (DEMGLGKT) is a binding site for ATP. Residues 294–297 (DEGH) carry the DEGH box motif. The Helicase C-terminal domain maps to 501 to 658 (LLDFMLAAIR…NNESAEKHFT (158 aa)). The span at 741–753 (SQKIETTPATETS) shows a compositional bias: polar residues. The tract at residues 741–782 (SQKIETTPATETSVEAKPEPERRKRPAMPLSDDSADEDFQGF) is disordered. Residues 773-782 (DSADEDFQGF) are compositionally biased toward acidic residues.

It belongs to the SNF2/RAD54 helicase family. As to quaternary structure, interacts (via N-terminus) with spn-A/Rad51.

The protein localises to the nucleus. Its function is as follows. Involved in mitotic DNA repair and meiotic recombination. Functions in the recombinational DNA repair pathway. Essential for interhomolog gene conversion (GC), but may have a less important role in intersister GC than spn-A/Rad51. In the presence of DNA, spn-A/Rad51 enhances the ATPase activity of okr/Rad54. This is DNA repair and recombination protein RAD54-like from Drosophila pseudoobscura pseudoobscura (Fruit fly).